A 659-amino-acid chain; its full sequence is Interferon-induced GTP-binding protein Mx1 (659 aa).

Met1 is subject to N-acetylmethionine. Residues 1-40 (MVNSKGEITDSDPGSNHLLLNGLPDKAGKNQDTEPENSLC) form a disordered region. One can recognise a Dynamin-type G domain in the interval 65 to 338 (DLALPAIAVI…LITHICKTLP (274 aa)). A G1 motif region spans residues 75–82 (GDQSSGKS). Residue 75 to 82 (GDQSSGKS) participates in GTP binding. The interval 100-102 (VTR) is G2 motif. Positions 176–179 (DLPG) are G3 motif. Residues 176–180 (DLPGI) and 245–248 (TKPD) contribute to the GTP site. Residues 245–248 (TKPD) form a G4 motif region. Residues 277–280 (KCRG) are G5 motif. The interval 339–364 (LLENQIKENHEKITEELKKYGSDVPE) is bundle signaling element (BSE). Residues 364 to 531 (EEEHEKMFFL…HFQMEQIVYC (168 aa)) are middle domain. The interval 365 to 629 (EEHEKMFFLI…KDTYNWLLKE (265 aa)) is stalk. Positions 552–555 (KNKK) are critical for lipid-binding. The GED domain occupies 571-659 (LSEIFEHLLA…ARRRLAKFPG (89 aa)).

The protein belongs to the TRAFAC class dynamin-like GTPase superfamily. Dynamin/Fzo/YdjA family. In terms of assembly, homooligomer. Oligomerizes into multimeric filamentous or ring-like structures by virtue of its stalk domain. Oligomerization is critical for GTPase activity, protein stability, and recognition of viral target structures. Interacts with TRPC1, TRPC3, TRPC4, TRPC5, TRPC6 and TRPC7. Interacts with HSPA5. Interacts with TUBB/TUBB5. Interacts with DDX39A and DDX39B. In terms of processing, ISGylated.

It is found in the cytoplasm. The protein resides in the endoplasmic reticulum membrane. It localises to the perinuclear region. In terms of biological role, interferon-induced dynamin-like GTPase with antiviral activity. The polypeptide is Interferon-induced GTP-binding protein Mx1 (MX1) (Phoca vitulina (Harbor seal)).